A 397-amino-acid chain; its full sequence is Proteasome-activating nucleotidase (397 aa).

Residues Gly-12–Pro-58 are a coiled coil. ATP is bound by residues Gly-182–Leu-187 and His-321. The interval Met-395–Gly-397 is docks into pockets in the proteasome alpha-ring to cause gate opening.

The protein belongs to the AAA ATPase family. As to quaternary structure, homohexamer. The hexameric complex has a two-ring architecture resembling a top hat that caps the 20S proteasome core at one or both ends. Upon ATP-binding, the C-terminus of PAN interacts with the alpha-rings of the proteasome core by binding to the intersubunit pockets.

It is found in the cytoplasm. ATPase which is responsible for recognizing, binding, unfolding and translocation of substrate proteins into the archaeal 20S proteasome core particle. Is essential for opening the gate of the 20S proteasome via an interaction with its C-terminus, thereby allowing substrate entry and access to the site of proteolysis. Thus, the C-termini of the proteasomal ATPase function like a 'key in a lock' to induce gate opening and therefore regulate proteolysis. Unfolding activity requires energy from ATP hydrolysis, whereas ATP binding alone promotes ATPase-20S proteasome association which triggers gate opening, and supports translocation of unfolded substrates. The chain is Proteasome-activating nucleotidase from Thermococcus gammatolerans (strain DSM 15229 / JCM 11827 / EJ3).